An 82-amino-acid polypeptide reads, in one-letter code: Small ribosomal subunit protein eS21 (82 aa).

Belongs to the eukaryotic ribosomal protein eS21 family.

The sequence is that of Small ribosomal subunit protein eS21 (RPS21) from Cyanophora paradoxa.